A 354-amino-acid chain; its full sequence is Peptide chain release factor 1 (354 aa).

At glutamine 230 the chain carries N5-methylglutamine.

Belongs to the prokaryotic/mitochondrial release factor family. Post-translationally, methylated by PrmC. Methylation increases the termination efficiency of RF1.

Its subcellular location is the cytoplasm. Peptide chain release factor 1 directs the termination of translation in response to the peptide chain termination codons UAG and UAA. This chain is Peptide chain release factor 1, found in Novosphingobium aromaticivorans (strain ATCC 700278 / DSM 12444 / CCUG 56034 / CIP 105152 / NBRC 16084 / F199).